Here is a 390-residue protein sequence, read N- to C-terminus: Chorismate synthase 1 (390 aa).

NADP(+)-binding residues include Arg-39 and Arg-45. The tract at residues 95-117 (EQEEKEMKRKVTKPRPGHADLNG) is disordered. FMN-binding positions include 132–134 (RSS), 253–254 (NA), Gly-298, 313–317 (KPIPT), and Arg-339.

This sequence belongs to the chorismate synthase family. Homotetramer. The cofactor is FMNH2.

It carries out the reaction 5-O-(1-carboxyvinyl)-3-phosphoshikimate = chorismate + phosphate. The protein operates within metabolic intermediate biosynthesis; chorismate biosynthesis; chorismate from D-erythrose 4-phosphate and phosphoenolpyruvate: step 7/7. Catalyzes the anti-1,4-elimination of the C-3 phosphate and the C-6 proR hydrogen from 5-enolpyruvylshikimate-3-phosphate (EPSP) to yield chorismate, which is the branch point compound that serves as the starting substrate for the three terminal pathways of aromatic amino acid biosynthesis. This reaction introduces a second double bond into the aromatic ring system. The chain is Chorismate synthase 1 from Bacillus cereus (strain ATCC 14579 / DSM 31 / CCUG 7414 / JCM 2152 / NBRC 15305 / NCIMB 9373 / NCTC 2599 / NRRL B-3711).